We begin with the raw amino-acid sequence, 363 residues long: Protein TAX-1 (363 aa).

The tract at residues 129-363 (RYGNAEEILS…IPFRGVAAEQ (235 aa)) is required for localization to the flagellum and for flagellar motility. 2 TPR repeats span residues 157–190 (AELH…LSVM) and 199–232 (TFAY…WLKH).

Interacts with TTC29.

The protein localises to the cytoplasm. The protein resides in the cytoskeleton. It localises to the flagellum axoneme. Its function is as follows. Required for flagellum motility. In Trypanosoma brucei brucei (strain 927/4 GUTat10.1), this protein is Protein TAX-1.